Reading from the N-terminus, the 560-residue chain is Nuclear receptor subfamily 5 group A member 2 (560 aa).

Residues 21-55 form a disordered region; that stretch reads IASAPGSETRHSPKREEQLREKRAGLPDRHRRPIP. Residues 28–48 are compositionally biased toward basic and acidic residues; that stretch reads ETRHSPKREEQLREKRAGLPD. The nuclear receptor DNA-binding region spans 104–175; that stretch reads EELCPVCGDK…KCIDVGMKLE (72 aa). Cys-107, Cys-110, Cys-124, Cys-127, Cys-143, Cys-149, Cys-159, and Cys-162 together coordinate Zn(2+). 2 NR C4-type zinc fingers span residues 107 to 127 and 143 to 167; these read CPVCGDKVSGYHYGLLTCESC and CIENQNCQIDKTQRKRCPYCRFKKC. The segment at 173–188 is C-terminal extension (CTE); sequence KLEAVRADRMRGGRNK. An FTZ-F1 box motif is present at residues 189–208; it reads FGPMYKRDRALKQQKKALIR. Residue Lys-289 forms a Glycyl lysine isopeptide (Lys-Gly) (interchain with G-Cter in SUMO1) linkage. Positions 319-558 constitute an NR LBD domain; the sequence is SIPHLILELL…NLLIEMLHAK (240 aa). A phospholipid derivative contacts are provided by Tyr-535 and Lys-539. The AF-2 stretch occupies residues 547–558; sequence YNNLLIEMLHAK.

It belongs to the nuclear hormone receptor family. NR5 subfamily. As to quaternary structure, monomer; Binds DNA as a monomer. Interacts with nuclear receptor corepressors NR0B1 and NR0B2; repressing NR5A2 nuclear receptor activity. Interacts with nuclear receptor coactivators CTNNB1, PPARGC1A and NCOA2; interaction takes place following ligand-binding and promotes target gene activation. Interacts (when sumoylated) with GPS2; interaction with GPS2 onto hepatic acute phase protein promoters prevents N-Cor corepressor complex dissociation. Interacts with HNF1A. Interacts with GRIP1. Post-translationally, sumoylated by SUMO1 at Lys-289 during the hepatic acute phase response, leading to promote interaction with GPS2 and prevent N-Cor corepressor complex dissociation.

Its subcellular location is the nucleus. The protein localises to the chromosome. Functionally, orphan nuclear receptor that binds DNA as a monomer to the 5'-TCAAGGCCA-3' sequence and controls expression of target genes: regulates key biological processes, such as early embryonic development, cholesterol and bile acid synthesis pathways, as well as liver and pancreas morphogenesis. Ligand-binding causes conformational change which causes recruitment of coactivators, promoting target gene activation. The specific ligand is unknown, but specific phospholipids, such as phosphatidylethanolamine, phosphatidylserine, dilauroyl phosphatidylcholine and diundecanoyl phosphatidylcholine can act as ligand in vitro. Acts as a pioneer transcription factor, which unwraps target DNA from histones and elicits local opening of closed chromatin. Plays a central role during preimplantation stages of embryonic development. Plays a minor role in zygotic genome activation (ZGA) by regulating a small set of two-cell stage genes. Plays a major role in morula development (2-16 cells embryos) by acting as a master regulator at the 8-cell stage, controlling expression of lineage-specifying transcription factors and genes involved in mitosis, telomere maintenance and DNA repair. Zygotic NR5A2 binds to both closed and open chromatin with other transcription factors, often at SINE B1/Alu repeats DNA elements, promoting chromatin accessibility at nearby regulatory regions. Also involved in the epiblast stage of development and embryonic stem cell pluripotency, by promoting expression of POU5F1/OCT4. Regulates other processes later in development, such as formation of connective tissue in lower jaw and middle ear, neural stem cell differentiation, ovarian follicle development and Sertoli cell differentiation. Involved in exocrine pancreas development and acinar cell differentiation. Acts as an essential transcriptional regulator of lipid metabolism. Key regulator of cholesterol 7-alpha-hydroxylase gene (CYP7A) expression in liver. Activates the transcription of CYP2C38. Also acts as a negative regulator of inflammation in different organs, such as intestine, liver and pancreas. Protects against intestinal inflammation via its ability to regulate glucocorticoid production. Plays an anti-inflammatory role during the hepatic acute phase response by acting as a corepressor: inhibits the hepatic acute phase response by preventing dissociation of the N-Cor corepressor complex. Acts as a regulator of immunity by promoting lymphocyte T-cell development, proliferation and effector functions. Also involved in resolution of endoplasmic reticulum stress in the liver. The chain is Nuclear receptor subfamily 5 group A member 2 from Mus musculus (Mouse).